The sequence spans 534 residues: Cytochalasin cluster regulator ccsR (534 aa).

A DNA-binding region (zn(2)-C6 fungal-type) is located at residues 13–54; that stretch reads CDRCRRQKLRCVRPLKHGACEHPNNIEALEPCERCSRAGTPC. Disordered regions lie at residues 88-170 and 350-378; these read IPKQ…LDAP and TSAR…SAAS. Polar residues predominate over residues 109 to 125; the sequence is TGQNKGINDANAVTGSL. Over residues 130–146 the composition is skewed to basic and acidic residues; that stretch reads PDHRSGSNVHRQPEARP. Over residues 361–378 the composition is skewed to low complexity; the sequence is DMCASSSNRDSSDLSAAS.

The protein localises to the nucleus. Its function is as follows. Transcription factor involved in regulation of gene cluster that mediates the biosynthesis of the mycotoxins cytochalasins E and K. The chain is Cytochalasin cluster regulator ccsR from Aspergillus clavatus (strain ATCC 1007 / CBS 513.65 / DSM 816 / NCTC 3887 / NRRL 1 / QM 1276 / 107).